We begin with the raw amino-acid sequence, 350 residues long: Streptomycin biosynthesis operon possible regulatory protein (350 aa).

The span at Met1 to Glu10 shows a compositional bias: polar residues. Disordered regions lie at residues Met1–Thr20, Ala168–Thr189, and Ala211–Asp258. 2 stretches are compositionally biased toward basic and acidic residues: residues Ile177–Thr189 and Asp223–Gln242.

The protein is Streptomycin biosynthesis operon possible regulatory protein (strR) of Streptomyces griseus.